Reading from the N-terminus, the 380-residue chain is Cell division protein ZipA (380 aa).

Over 1 to 7 (MEDNFRN) the chain is Periplasmic. A helical transmembrane segment spans residues 8-28 (VLIILSAIVITAIFIHGLWTL). Over 29 to 380 (RKQKNPYKLK…DRKSRIALVE (352 aa)) the chain is Cytoplasmic.

This sequence belongs to the ZipA family. In terms of assembly, interacts with FtsZ via their C-terminal domains.

It is found in the cell inner membrane. Functionally, essential cell division protein that stabilizes the FtsZ protofilaments by cross-linking them and that serves as a cytoplasmic membrane anchor for the Z ring. Also required for the recruitment to the septal ring of downstream cell division proteins. The polypeptide is Cell division protein ZipA (Colwellia psychrerythraea (strain 34H / ATCC BAA-681) (Vibrio psychroerythus)).